The sequence spans 351 residues: Protein MSS2, mitochondrial (351 aa).

TPR repeat units lie at residues 155 to 188 and 260 to 294; these read HLTV…ENST and KECF…MDLE.

As to quaternary structure, interacts with COX18.

The protein resides in the mitochondrion inner membrane. Required to stabilize mitochondrial cytochrome C oxidase subunit 2 (COX2) and to translocate the C-terminal domain of COX2 through the inner membrane. This is Protein MSS2, mitochondrial (MSS2) from Saccharomyces cerevisiae (strain ATCC 204508 / S288c) (Baker's yeast).